The primary structure comprises 280 residues: Pantothenate synthetase (280 aa).

31-38 (MGNLHAGH) is a binding site for ATP. His38 functions as the Proton donor in the catalytic mechanism. Position 62 (Gln62) interacts with (R)-pantoate. Gln62 is a beta-alanine binding site. Residue 150 to 153 (GKKD) participates in ATP binding. Gln156 is a (R)-pantoate binding site. ATP is bound by residues Val179 and 187 to 190 (MSSR).

The protein belongs to the pantothenate synthetase family. As to quaternary structure, homodimer.

The protein resides in the cytoplasm. The catalysed reaction is (R)-pantoate + beta-alanine + ATP = (R)-pantothenate + AMP + diphosphate + H(+). It participates in cofactor biosynthesis; (R)-pantothenate biosynthesis; (R)-pantothenate from (R)-pantoate and beta-alanine: step 1/1. Functionally, catalyzes the condensation of pantoate with beta-alanine in an ATP-dependent reaction via a pantoyl-adenylate intermediate. The protein is Pantothenate synthetase of Xanthomonas euvesicatoria pv. vesicatoria (strain 85-10) (Xanthomonas campestris pv. vesicatoria).